Consider the following 135-residue polypeptide: T-cell receptor gamma chain V region 5/10-13 (135 aa).

The first 18 residues, 1 to 18, serve as a signal peptide directing secretion; it reads MLLLRWPTFCCLWVFGLG. A v segment region spans residues 19-114; the sequence is QLEQTELSVT…DEATYYCAVC (96 aa). The interval 115-135 is j segment; sequence RSGTSWVKIFAKGTKLVVIPP.

This chain is T-cell receptor gamma chain V region 5/10-13 (Tcrg-V1), found in Mus musculus (Mouse).